The primary structure comprises 304 residues: L-xylo-3-hexulose reductase (304 aa).

The NADP(+) site is built by I19, D68, and N107. Catalysis depends on proton donor residues S163 and S164. NADP(+) is bound by residues Y177, K181, and A209. The active-site Proton acceptor is Y177. K181 acts as the Lowers pKa of active site Tyr in catalysis.

The protein belongs to the short-chain dehydrogenases/reductases (SDR) family.

The catalysed reaction is D-sorbitol + NADP(+) = L-xylo-3-hexulose + NADPH + H(+). The protein operates within carbohydrate degradation. Functionally, L-xylulose reductase involved in the catabolism of D-galactose through an oxidoreductive pathway. Catalyzes the NADPH-dependent reduction of L-xylo-3-hexulose. Is also active with D-ribulose and L-xylulose, and to a lesser extent with D-xylulose, D-fructose and L- and D-sorbose. In the reverse reaction, shows activity with D-sorbitol and D-mannitol, low activity with xylitol, but no activity with galactitol, ribitol, and L- and D-arabitol. This is L-xylo-3-hexulose reductase from Hypocrea jecorina (strain QM6a) (Trichoderma reesei).